Here is a 66-residue protein sequence, read N- to C-terminus: Large ribosomal subunit protein bL33c (66 aa).

The protein belongs to the bacterial ribosomal protein bL33 family.

The protein resides in the plastid. Its subcellular location is the chloroplast. The protein is Large ribosomal subunit protein bL33c of Arabis hirsuta (Hairy rock-cress).